The primary structure comprises 160 residues: Protein-export protein SecB (160 aa).

The protein belongs to the SecB family. In terms of assembly, homotetramer, a dimer of dimers. One homotetramer interacts with 1 SecA dimer.

The protein localises to the cytoplasm. Functionally, one of the proteins required for the normal export of preproteins out of the cell cytoplasm. It is a molecular chaperone that binds to a subset of precursor proteins, maintaining them in a translocation-competent state. It also specifically binds to its receptor SecA. This Burkholderia multivorans (strain ATCC 17616 / 249) protein is Protein-export protein SecB.